We begin with the raw amino-acid sequence, 824 residues long: Phenylalanine--tRNA ligase beta subunit (824 aa).

The region spanning 39-153 (SEQAKNVVIG…NIPPIGSNAV (115 aa)) is the tRNA-binding domain. Positions 414-507 (KKSISVNLRM…RLIGYDNFDS (94 aa)) constitute a B5 domain. The Mg(2+) site is built by D485, D491, E494, and E495. In terms of domain architecture, FDX-ACB spans 730-823 (PTVPYMERDI…LKEKIKAELR (94 aa)).

It belongs to the phenylalanyl-tRNA synthetase beta subunit family. Type 1 subfamily. Tetramer of two alpha and two beta subunits. The cofactor is Mg(2+).

It is found in the cytoplasm. It catalyses the reaction tRNA(Phe) + L-phenylalanine + ATP = L-phenylalanyl-tRNA(Phe) + AMP + diphosphate + H(+). This Prochlorococcus marinus (strain NATL2A) protein is Phenylalanine--tRNA ligase beta subunit.